A 449-amino-acid chain; its full sequence is UDP-N-acetylmuramoylalanine--D-glutamate ligase (449 aa).

119–125 (GTNGKTT) is a binding site for ATP.

Belongs to the MurCDEF family.

It is found in the cytoplasm. It catalyses the reaction UDP-N-acetyl-alpha-D-muramoyl-L-alanine + D-glutamate + ATP = UDP-N-acetyl-alpha-D-muramoyl-L-alanyl-D-glutamate + ADP + phosphate + H(+). It functions in the pathway cell wall biogenesis; peptidoglycan biosynthesis. Cell wall formation. Catalyzes the addition of glutamate to the nucleotide precursor UDP-N-acetylmuramoyl-L-alanine (UMA). The sequence is that of UDP-N-acetylmuramoylalanine--D-glutamate ligase from Lactococcus lactis subsp. cremoris (strain SK11).